Reading from the N-terminus, the 509-residue chain is tRNA (guanine(37)-N(1))-methyltransferase (509 aa).

The N-terminal 57 residues, 1 to 57 (MVLWILWRPFGFSRRLLKLERHSITESKSLIPLAWTSLTQTLSESPGIFLLGQRKRF), are a transit peptide targeting the mitochondrion. S-adenosyl-L-methionine is bound by residues His-289, 327-328 (DL), 355-356 (DG), and Asn-387. Residues 478–509 (TKNPENHEDPPLKRQRTAEAFSDEKTQIASNT) are disordered.

This sequence belongs to the class I-like SAM-binding methyltransferase superfamily. TRM5/TYW2 family. As to quaternary structure, monomer.

Its subcellular location is the mitochondrion matrix. The protein resides in the nucleus. It is found in the cytoplasm. It catalyses the reaction guanosine(37) in tRNA + S-adenosyl-L-methionine = N(1)-methylguanosine(37) in tRNA + S-adenosyl-L-homocysteine + H(+). In terms of biological role, involved in mitochondrial tRNA methylation. Specifically methylates the N1 position of guanosine-37 in various tRNAs. Methylation is not dependent on the nature of the nucleoside 5' of the target nucleoside. This is the first step in the biosynthesis of wybutosine (yW), a modified base adjacent to the anticodon of tRNAs and required for accurate decoding. The polypeptide is tRNA (guanine(37)-N(1))-methyltransferase (Macaca mulatta (Rhesus macaque)).